A 358-amino-acid chain; its full sequence is NADH-quinone oxidoreductase subunit H (358 aa).

8 helical membrane-spanning segments follow: residues 30-50, 96-116, 129-149, 168-188, 201-221, 265-285, 297-317, and 336-356; these read IAVG…LIYM, FLYN…FACI, VGVF…LLAG, IISY…LMGT, GWFI…YLIA, FIVA…LHII, IPGF…LMWI, and YLVP…AFGF.

It belongs to the complex I subunit 1 family. As to quaternary structure, NDH-1 is composed of 14 different subunits. Subunits NuoA, H, J, K, L, M, N constitute the membrane sector of the complex.

The protein localises to the cell inner membrane. It carries out the reaction a quinone + NADH + 5 H(+)(in) = a quinol + NAD(+) + 4 H(+)(out). Its function is as follows. NDH-1 shuttles electrons from NADH, via FMN and iron-sulfur (Fe-S) centers, to quinones in the respiratory chain. The immediate electron acceptor for the enzyme in this species is believed to be ubiquinone. Couples the redox reaction to proton translocation (for every two electrons transferred, four hydrogen ions are translocated across the cytoplasmic membrane), and thus conserves the redox energy in a proton gradient. This subunit may bind ubiquinone. This is NADH-quinone oxidoreductase subunit H from Bacteroides thetaiotaomicron (strain ATCC 29148 / DSM 2079 / JCM 5827 / CCUG 10774 / NCTC 10582 / VPI-5482 / E50).